The chain runs to 78 residues: Small ribosomal subunit protein bS18 (78 aa).

This sequence belongs to the bacterial ribosomal protein bS18 family. Part of the 30S ribosomal subunit. Forms a tight heterodimer with protein bS6.

In terms of biological role, binds as a heterodimer with protein bS6 to the central domain of the 16S rRNA, where it helps stabilize the platform of the 30S subunit. The polypeptide is Small ribosomal subunit protein bS18 (Frankia casuarinae (strain DSM 45818 / CECT 9043 / HFP020203 / CcI3)).